A 525-amino-acid chain; its full sequence is cAMP-dependent protein kinase regulatory subunit (525 aa).

Positions 28-213 (QFCANWFNSK…RIRGSIGNNL (186 aa)) are dimerization and phosphorylation. Disordered regions lie at residues 114–146 (MDAS…SSLG) and 170–196 (SVSA…TVIP). Positions 124–146 (PAPATPAAPAAPAAPAAPFSSLG) are enriched in low complexity. Position 170 is a phosphoserine; by autocatalysis (S170). A nucleoside 3',5'-cyclic phosphate is bound by residues 214 to 345 (LFRN…FLMD) and 348 to 472 (LFER…TYGD). Positions 295, 304, and 417 each coordinate 3',5'-cyclic AMP. Residues 497–525 (SGADTSFPHPMDSSAKPGEGAWSAPNPFA) are disordered.

The protein belongs to the cAMP-dependent kinase regulatory chain family. In terms of assembly, tetramer, composed of 2 regulatory (R) and 2 catalytic (C) subunits. In the presence of cAMP it dissociates into 2 active monomeric C subunits and an R dimer.

The protein is cAMP-dependent protein kinase regulatory subunit (PKAR) of Mycosarcoma maydis (Corn smut fungus).